The following is a 384-amino-acid chain: Probable protein phosphatase 2C 48 (384 aa).

Residues 47–358 (ITGEFSMAVV…DDITVIVVFL (312 aa)) form the PPM-type phosphatase domain. S78 carries the phosphoserine modification. Mn(2+)-binding residues include D89, G90, D290, and D349.

Belongs to the PP2C family. Mg(2+) is required as a cofactor. Mn(2+) serves as cofactor.

It carries out the reaction O-phospho-L-seryl-[protein] + H2O = L-seryl-[protein] + phosphate. The catalysed reaction is O-phospho-L-threonyl-[protein] + H2O = L-threonyl-[protein] + phosphate. In terms of biological role, may dephosphorylate and repress plasma membrane H(+)-ATPases (PM H(+)-ATPases, e.g. AHA1 and AHA2), thus influencing negatively plant growth and fitness. The chain is Probable protein phosphatase 2C 48 from Arabidopsis thaliana (Mouse-ear cress).